Consider the following 575-residue polypeptide: FAD-dependent monooxygenase rstn6 (575 aa).

An N-terminal signal peptide occupies residues 1–17 (MYDVIVIGAGWCGLVAA). Ile-106 serves as a coordination point for FAD. 2 N-linked (GlcNAc...) asparagine glycosylation sites follow: Asn-239 and Asn-295.

Belongs to the FAD-binding monooxygenase family. Requires FAD as cofactor.

It participates in antifungal biosynthesis. FAD-dependent monooxygenase; part of the gene cluster that mediates the biosynthesis of the tetrahydropyranyl antifungal agent restricticin that acts as an inhibitor of CYP51 and blocks the ergosterol biosynthesis. The highly reducing polyketide synthase rstn3, the short chain dehydrogenase rstn4, the cyclase rstn5, the FAD-dependent monooxygenase rstn6 and the enoylreductase rstn7 are required to generate the first stable intermediate desmethylrestrictinol. Rstn3 with rstn7 biosynthesize the first polyketide chain intermediate that is reduced by rstn4, followed by epoxidation by rstn6 before 6-endo cyclization via epoxide opening by rstn5 leads to desmethylrestrictinol. The methyltransferase rstn1 then catalyzes the C4 O-methylation of desmethylrestrictinol to produce restrictinol, and the nonribosomal peptide synthetase rstn8 catalyzes the C3 esterification of restrictinol with glycine that leads to restricticin. The polypeptide is FAD-dependent monooxygenase rstn6 (Aspergillus nomiae NRRL (strain ATCC 15546 / NRRL 13137 / CBS 260.88 / M93)).